The following is a 253-amino-acid chain: Large ribosomal subunit protein mL57 (253 aa).

The transit peptide at 1–28 (MENSMMFISRSLRRPVTALNCNLQSVRT) directs the protein to the mitochondrion.

Belongs to the ribonuclease III family. Mitochondrion-specific ribosomal protein mL57 subfamily. In terms of assembly, component of the mitochondrial large ribosomal subunit (mt-LSU). Mature yeast 74S mitochondrial ribosomes consist of a small (37S) and a large (54S) subunit. The 37S small subunit contains a 15S ribosomal RNA (15S mt-rRNA) and 34 different proteins. The 54S large subunit contains a 21S rRNA (21S mt-rRNA) and 46 different proteins. mL57 forms a heterodimer with mL44 and stabilizes rRNA expansion segments 1/2 at a membrane-facing protuberance close to the point of attachment of the ribosome to the translocon in the membrane.

It is found in the mitochondrion. Functionally, component of the mitochondrial ribosome (mitoribosome), a dedicated translation machinery responsible for the synthesis of mitochondrial genome-encoded proteins, including at least some of the essential transmembrane subunits of the mitochondrial respiratory chain. The mitoribosomes are attached to the mitochondrial inner membrane and translation products are cotranslationally integrated into the membrane. This chain is Large ribosomal subunit protein mL57 (MRPL15), found in Saccharomyces cerevisiae (strain ATCC 204508 / S288c) (Baker's yeast).